Consider the following 154-residue polypeptide: Methylglyoxal synthase (154 aa).

One can recognise an MGS-like domain in the interval 6–154 (QSLPAKKNIA…KYLATRQIDI (149 aa)). Substrate-binding positions include His19, Lys23, 45–48 (TGTT), and 65–66 (SG). Asp71 functions as the Proton donor/acceptor in the catalytic mechanism. His98 is a binding site for substrate.

This sequence belongs to the methylglyoxal synthase family.

The enzyme catalyses dihydroxyacetone phosphate = methylglyoxal + phosphate. Catalyzes the formation of methylglyoxal from dihydroxyacetone phosphate. The chain is Methylglyoxal synthase from Pseudoalteromonas translucida (strain TAC 125).